A 368-amino-acid chain; its full sequence is Flap endonuclease 1 (368 aa).

The N-domain stretch occupies residues 1 to 104 (MGIHDLSKVI…GELLKRGARR (104 aa)). A Mg(2+)-binding site is contributed by aspartate 34. 2 residues coordinate DNA: arginine 47 and arginine 70. Aspartate 86 is a Mg(2+) binding site. Residues 103–123 (RRKEAQANLEEATEQGDTEQM) form a disordered region. An I-domain region spans residues 122–251 (QMEKFSRRLV…QKAYQLIKEH (130 aa)). Residues glutamate 158, glutamate 160, aspartate 179, and aspartate 181 each contribute to the Mg(2+) site. Residue glutamate 158 coordinates DNA. The DNA site is built by glycine 229 and aspartate 231. Aspartate 231 contacts Mg(2+). Positions 334–342 (QQGRLDSFF) are interaction with PCNA.

Belongs to the XPG/RAD2 endonuclease family. FEN1 subfamily. As to quaternary structure, interacts with PCNA. Three molecules of FEN1 bind to one PCNA trimer with each molecule binding to one PCNA monomer. PCNA stimulates the nuclease activity without altering cleavage specificity. Mg(2+) is required as a cofactor. Post-translationally, phosphorylated. Phosphorylation upon DNA damage induces relocalization to the nuclear plasma.

The protein localises to the nucleus. It localises to the nucleolus. It is found in the nucleoplasm. Its subcellular location is the mitochondrion. Structure-specific nuclease with 5'-flap endonuclease and 5'-3' exonuclease activities involved in DNA replication and repair. During DNA replication, cleaves the 5'-overhanging flap structure that is generated by displacement synthesis when DNA polymerase encounters the 5'-end of a downstream Okazaki fragment. It enters the flap from the 5'-end and then tracks to cleave the flap base, leaving a nick for ligation. Also involved in the long patch base excision repair (LP-BER) pathway, by cleaving within the apurinic/apyrimidinic (AP) site-terminated flap. Acts as a genome stabilization factor that prevents flaps from equilibrating into structures that lead to duplications and deletions. Also possesses 5'-3' exonuclease activity on nicked or gapped double-stranded DNA, and exhibits RNase H activity. Also involved in replication and repair of rDNA and in repairing mitochondrial DNA. The polypeptide is Flap endonuclease 1 (Monosiga brevicollis (Choanoflagellate)).